The chain runs to 206 residues: Small ribosomal subunit protein uS4 (206 aa).

The tract at residues 28 to 48 is disordered; that stretch reads YMERRPYGPGEHGRARKKQDS. Residues 95–160 enclose the S4 RNA-binding domain; the sequence is MRLDALVLRA…MPPFQVAAAG (66 aa).

This sequence belongs to the universal ribosomal protein uS4 family. As to quaternary structure, part of the 30S ribosomal subunit. Contacts protein S5. The interaction surface between S4 and S5 is involved in control of translational fidelity.

Functionally, one of the primary rRNA binding proteins, it binds directly to 16S rRNA where it nucleates assembly of the body of the 30S subunit. With S5 and S12 plays an important role in translational accuracy. This chain is Small ribosomal subunit protein uS4, found in Paenarthrobacter aurescens (strain TC1).